The chain runs to 308 residues: Carbamate kinase (308 aa).

It belongs to the carbamate kinase family.

The protein localises to the cytoplasm. The catalysed reaction is hydrogencarbonate + NH4(+) + ATP = carbamoyl phosphate + ADP + H2O + H(+). The chain is Carbamate kinase from Synechocystis sp. (strain ATCC 27184 / PCC 6803 / Kazusa).